The primary structure comprises 584 residues: MSLKQQVDLLPNKPGCYLFFNKDNDVIYVGKAKNLKKRVSTYFNKAYNIKTTRLVREITDLKYFIVDNEKESLLLEKNLIKKYHPKYNVLLNDDKTYPYIIITNQKDPMYKYVRKYDKKALKNYGPLPIGSNARSILLTLQRLFPLRMCQGNLNKPCLYYHLNQCSGACFKQVDPSYYEYQIKQVDKFFKGEINQVKQTLVKQMQKASDNLQFEQAQRIKDQITSLDFITAKQNVDIVTNKNIDVVNYEINQDKICFVILFYRLGQLTYKDEYIQNYEGQNLSELFNSYLQQIYQKNIYPDVLLIPNEIELLDLDQNLLEFSSYSLNKQDDVFIKLAKQNAIDSLNKSVISHNVNSGDEIEILEQLKQISNASKYLKRIEVFDISNIYSQFITGACIVYINAKPIRNEFRKYNIDPSYTSDFSRMKFMLEKRFLKQIKEKEQLPDLVIVDGGIIQIHAAKEVLNKLNLKIDVIGLSKDDHHKTRYLIDIFEQTIDIKNFKKLYNFLTSLQIRVDEYAKSGFRKKYHNQLNDQILLIKGVGKKTNLKLYKHFKTIDNIKNASFDELNKVINNKKITNLIISNLNK.

In terms of domain architecture, GIY-YIG spans 12 to 89 (NKPGCYLFFN…IKKYHPKYNV (78 aa)). The 36-residue stretch at 194–229 (NQVKQTLVKQMQKASDNLQFEQAQRIKDQITSLDFI) folds into the UVR domain.

This sequence belongs to the UvrC family. Interacts with UvrB in an incision complex.

The protein localises to the cytoplasm. In terms of biological role, the UvrABC repair system catalyzes the recognition and processing of DNA lesions. UvrC both incises the 5' and 3' sides of the lesion. The N-terminal half is responsible for the 3' incision and the C-terminal half is responsible for the 5' incision. In Mycoplasma mycoides subsp. mycoides SC (strain CCUG 32753 / NCTC 10114 / PG1), this protein is UvrABC system protein C.